A 517-amino-acid polypeptide reads, in one-letter code: GMP synthase [glutamine-hydrolyzing] (517 aa).

The Glutamine amidotransferase type-1 domain maps to 9–199 (RILILDFGSQ…VLGICGCERL (191 aa)). Cysteine 86 functions as the Nucleophile in the catalytic mechanism. Catalysis depends on residues histidine 173 and glutamate 175. The 193-residue stretch at 200 to 392 (WTSESIIEDA…LGLPYEMLYR (193 aa)) folds into the GMPS ATP-PPase domain. 227–233 (SGGVDSS) contributes to the ATP binding site.

In terms of assembly, homodimer.

It carries out the reaction XMP + L-glutamine + ATP + H2O = GMP + L-glutamate + AMP + diphosphate + 2 H(+). Its pathway is purine metabolism; GMP biosynthesis; GMP from XMP (L-Gln route): step 1/1. Catalyzes the synthesis of GMP from XMP. This chain is GMP synthase [glutamine-hydrolyzing], found in Vibrio vulnificus (strain CMCP6).